Reading from the N-terminus, the 113-residue chain is Flagellar hook-basal body complex protein FliE (113 aa).

It belongs to the FliE family.

The protein localises to the bacterial flagellum basal body. The chain is Flagellar hook-basal body complex protein FliE from Rhizobium leguminosarum bv. trifolii (strain WSM2304).